The chain runs to 105 residues: uncharacterized protein (105 aa).

Helical transmembrane passes span 56-76 (ALIWSRKAIMRLIGLVVVLII) and 85-105 (INLNPYLVWVITTLILMGVFY).

The protein resides in the membrane. This is an uncharacterized protein from Aedes vexans (Inland floodwater mosquito).